Consider the following 172-residue polypeptide: Large ribosomal subunit protein uL10 (172 aa).

The protein belongs to the universal ribosomal protein uL10 family. Part of the ribosomal stalk of the 50S ribosomal subunit. The N-terminus interacts with L11 and the large rRNA to form the base of the stalk. The C-terminus forms an elongated spine to which L12 dimers bind in a sequential fashion forming a multimeric L10(L12)X complex.

Forms part of the ribosomal stalk, playing a central role in the interaction of the ribosome with GTP-bound translation factors. In Nitrobacter hamburgensis (strain DSM 10229 / NCIMB 13809 / X14), this protein is Large ribosomal subunit protein uL10.